A 260-amino-acid polypeptide reads, in one-letter code: Indole-3-glycerol phosphate synthase (260 aa).

The protein belongs to the TrpC family.

It catalyses the reaction 1-(2-carboxyphenylamino)-1-deoxy-D-ribulose 5-phosphate + H(+) = (1S,2R)-1-C-(indol-3-yl)glycerol 3-phosphate + CO2 + H2O. The protein operates within amino-acid biosynthesis; L-tryptophan biosynthesis; L-tryptophan from chorismate: step 4/5. The sequence is that of Indole-3-glycerol phosphate synthase from Leifsonia xyli subsp. xyli (strain CTCB07).